A 61-amino-acid chain; its full sequence is Cytotoxin 3 (61 aa).

4 disulfide bridges follow: Cys-3-Cys-22, Cys-15-Cys-39, Cys-43-Cys-54, and Cys-55-Cys-60.

The protein belongs to the three-finger toxin family. Short-chain subfamily. Type IB cytotoxin sub-subfamily. As to expression, expressed by the venom gland.

Its subcellular location is the secreted. This protein lyses red blood cells and has cardiotoxic and hypotensive activities. In Hemachatus haemachatus (Rinkhals), this protein is Cytotoxin 3.